A 1006-amino-acid polypeptide reads, in one-letter code: Unconventional myosin-Id (1006 aa).

An N-acetylalanine modification is found at alanine 2. The Myosin motor domain occupies 9 to 695 (FGKADFVLMD…TLFTLEELRA (687 aa)). Residue 102–109 (GESGAGKT) participates in ATP binding. Serine 200 bears the Phosphoserine mark. A Phosphotyrosine modification is found at tyrosine 536. An actin-binding region spans residues 572–594 (MIALVDNLASKEPYYVRCIKPND). 2 IQ domains span residues 699–719 (VRVVLFLQKVWRGTLARMRYK) and 721–741 (TKAALTIIRYYRRYKVKSYIH). Positions 776-896 (LQSIFNRWRA…MDPTKQYKVM (121 aa)) are interaction with calmodulin. A TH1 domain is found at 812 to 1005 (GQRADLGLQR…RSGFILSVPG (194 aa)).

This sequence belongs to the TRAFAC class myosin-kinesin ATPase superfamily. Myosin family. Interacts (via the two IQ motifs) with calmodulin. Binds an additional calmodulin chain via a third, C-terminal region. Interacts with F-actin. In terms of tissue distribution, detected on tracheal epithelial cells, and on epithelial cells and brush border cells in duodenum, jejunum and ileum. Detected on myelinated white matter in the cerebellum, and the myelinated part of the optic nerve. Detected on mature oligodendrocites. Detected on the outside of the myelin sheet that surrounds axons (at protein level). Ubiquitous. Highest levels in adult brain, and spinal cord. Moderate levels in lung, kidney, liver and spleen. Low levels in testis and heart (at protein level).

The protein localises to the cytoplasm. The protein resides in the perikaryon. It localises to the cell projection. It is found in the dendrite. Its subcellular location is the early endosome. The protein localises to the cell cortex. Its function is as follows. Unconventional myosin that functions as actin-based motor protein with ATPase activity. Plays a role in endosomal protein trafficking, and especially in the transfer of cargo proteins from early to recycling endosomes. Required for normal planar cell polarity in ciliated tracheal cells, for normal rotational polarity of cilia, and for coordinated, unidirectional ciliary movement in the trachea. Required for normal, polarized cilia organization in brain ependymal epithelial cells. This chain is Unconventional myosin-Id (Myo1d), found in Rattus norvegicus (Rat).